The following is a 201-amino-acid chain: Glutathione peroxidase 1 (201 aa).

Serine 32 carries the post-translational modification Phosphoserine. Residue selenocysteine 47 is part of the active site. A non-standard amino acid (selenocysteine) is located at residue selenocysteine 47. 3 positions are modified to N6-acetyllysine; alternate: lysine 86, lysine 112, and lysine 146. An N6-succinyllysine; alternate mark is found at lysine 86, lysine 112, and lysine 146. A phosphoserine mark is found at serine 195 and serine 199.

It belongs to the glutathione peroxidase family. In terms of assembly, homotetramer. Interacts with MIEN1. Post-translationally, during periods of oxidative stress, Sec-47 may react with a superoxide radical, irreversibly lose hydroselenide and be converted to dehydroalanine.

It localises to the cytoplasm. Its subcellular location is the mitochondrion. The enzyme catalyses 2 glutathione + H2O2 = glutathione disulfide + 2 H2O. It carries out the reaction a hydroperoxy polyunsaturated fatty acid + 2 glutathione = a hydroxy polyunsaturated fatty acid + glutathione disulfide + H2O. The catalysed reaction is tert-butyl hydroperoxide + 2 glutathione = tert-butanol + glutathione disulfide + H2O. It catalyses the reaction cumene hydroperoxide + 2 glutathione = 2-phenylpropan-2-ol + glutathione disulfide + H2O. The enzyme catalyses (13S)-hydroperoxy-(9Z,11E)-octadecadienoate + 2 glutathione = (13S)-hydroxy-(9Z,11E)-octadecadienoate + glutathione disulfide + H2O. It carries out the reaction (9S)-hydroperoxy-(10E,12Z)-octadecadienoate + 2 glutathione = (9S)-hydroxy-(10E,12Z)-octadecadienoate + glutathione disulfide + H2O. The catalysed reaction is (5S)-hydroperoxy-(6E,8Z,11Z,14Z)-eicosatetraenoate + 2 glutathione = (5S)-hydroxy-(6E,8Z,11Z,14Z)-eicosatetraenoate + glutathione disulfide + H2O. It catalyses the reaction (12S)-hydroperoxy-(5Z,8Z,10E,14Z)-eicosatetraenoate + 2 glutathione = (12S)-hydroxy-(5Z,8Z,10E,14Z)-eicosatetraenoate + glutathione disulfide + H2O. The enzyme catalyses (12R)-hydroperoxy-(5Z,8Z,10E,14Z)-eicosatetraenoate + 2 glutathione = (12R)-hydroxy-(5Z,8Z,10E,14Z)-eicosatetraenoate + glutathione disulfide + H2O. It carries out the reaction (15S)-hydroperoxy-(5Z,8Z,11Z,13E)-eicosatetraenoate + 2 glutathione = (15S)-hydroxy-(5Z,8Z,11Z,13E)-eicosatetraenoate + glutathione disulfide + H2O. The catalysed reaction is (5S)-hydroperoxy-(6E,8Z,11Z,14Z,17Z)-eicosapentaenoate + 2 glutathione = (5S)-hydroxy-(6E,8Z,11Z,14Z,17Z)-eicosapentaenoate + glutathione disulfide + H2O. It catalyses the reaction (12S)-hydroperoxy-(5Z,8Z,10E,14Z,17Z)-eicosapentaenoate + 2 glutathione = (12S)-hydroxy-(5Z,8Z,10E,14Z,17Z)-eicosapentaenoate + glutathione disulfide + H2O. The enzyme catalyses (15S)-hydroperoxy-(5Z,8Z,11Z,13E,17Z)-eicosapentaenoate + 2 glutathione = (15S)-hydroxy-(5Z,8Z,11Z,13E,17Z)-eicosapentaenoate + glutathione disulfide + H2O. It carries out the reaction (15S)-hydroperoxy-(11Z,13E)-eicosadienoate + 2 glutathione = (15S)-hydroxy-(11Z,13E)-eicosadienoate + glutathione disulfide + H2O. The catalysed reaction is (17S)-hydroperoxy-(4Z,7Z,10Z,13Z,15E,19Z)-docosahexaenoate + 2 glutathione = (17S)-hydroxy-(4Z,7Z,10Z,13Z,15E,19Z)-docosahexaenoate + glutathione disulfide + H2O. Its function is as follows. Catalyzes the reduction of hydroperoxides in a glutathione-dependent manner thus regulating cellular redox homeostasis. Can reduce small soluble hydroperoxides such as H2O2, cumene hydroperoxide and tert-butyl hydroperoxide, as well as several fatty acid-derived hydroperoxides. In platelets catalyzes the reduction of 12-hydroperoxyeicosatetraenoic acid, the primary product of the arachidonate 12-lipoxygenase pathway. This is Glutathione peroxidase 1 (GPX1) from Macaca fuscata fuscata (Japanese macaque).